Here is a 520-residue protein sequence, read N- to C-terminus: 2-isopropylmalate synthase (520 aa).

The region spanning 5-268 (VYIFDTTLRD…YTDVNTKEIY (264 aa)) is the Pyruvate carboxyltransferase domain. Mn(2+)-binding residues include D14, H202, H204, and N238. The interval 394–520 (KVLHFQVQSG…RQEIREEGTV (127 aa)) is regulatory domain.

This sequence belongs to the alpha-IPM synthase/homocitrate synthase family. LeuA type 1 subfamily. In terms of assembly, homodimer. The cofactor is Mn(2+).

The protein localises to the cytoplasm. The enzyme catalyses 3-methyl-2-oxobutanoate + acetyl-CoA + H2O = (2S)-2-isopropylmalate + CoA + H(+). It functions in the pathway amino-acid biosynthesis; L-leucine biosynthesis; L-leucine from 3-methyl-2-oxobutanoate: step 1/4. Functionally, catalyzes the condensation of the acetyl group of acetyl-CoA with 3-methyl-2-oxobutanoate (2-ketoisovalerate) to form 3-carboxy-3-hydroxy-4-methylpentanoate (2-isopropylmalate). In Aquifex aeolicus (strain VF5), this protein is 2-isopropylmalate synthase.